Here is a 124-residue protein sequence, read N- to C-terminus: MAVSLGASSRRRTAKLRRHVRVRKKVAGTPSRPRLVVTRSSRHIYAQVIDDVAGHTLASASTLDVSLRGGEGDKTEQARKVGALVAERAKAAGIAAVVFDRGGRTYSGRIAALADAARGNGLDF.

It belongs to the universal ribosomal protein uL18 family. As to quaternary structure, part of the 50S ribosomal subunit; part of the 5S rRNA/L5/L18/L25 subcomplex. Contacts the 5S and 23S rRNAs.

This is one of the proteins that bind and probably mediate the attachment of the 5S RNA into the large ribosomal subunit, where it forms part of the central protuberance. The polypeptide is Large ribosomal subunit protein uL18 (Frankia casuarinae (strain DSM 45818 / CECT 9043 / HFP020203 / CcI3)).